A 103-amino-acid polypeptide reads, in one-letter code: ATP synthase F(0) complex subunit g, mitochondrial (103 aa).

Alanine 2 bears the N-acetylalanine mark. Residues lysine 11, lysine 24, lysine 35, and lysine 54 each carry the N6-acetyllysine modification.

This sequence belongs to the ATPase g subunit family. As to quaternary structure, component of the ATP synthase complex composed at least of ATP5F1A/subunit alpha, ATP5F1B/subunit beta, ATP5MC1/subunit c (homooctomer), MT-ATP6/subunit a, MT-ATP8/subunit 8, ATP5ME/subunit e, ATP5MF/subunit f, ATP5MG/subunit g, ATP5MK/subunit k, ATP5MJ/subunit j, ATP5F1C/subunit gamma, ATP5F1D/subunit delta, ATP5F1E/subunit epsilon, ATP5PF/subunit F6, ATP5PB/subunit b, ATP5PD/subunit d, ATP5PO/subunit OSCP. ATP synthase complex consists of a soluble F(1) head domain (subunits alpha(3) and beta(3)) - the catalytic core - and a membrane F(0) domain - the membrane proton channel (subunits c, a, 8, e, f, g, k and j). These two domains are linked by a central stalk (subunits gamma, delta, and epsilon) rotating inside the F1 region and a stationary peripheral stalk (subunits F6, b, d, and OSCP).

It localises to the mitochondrion. It is found in the mitochondrion inner membrane. Subunit g, of the mitochondrial membrane ATP synthase complex (F(1)F(0) ATP synthase or Complex V) that produces ATP from ADP in the presence of a proton gradient across the membrane which is generated by electron transport complexes of the respiratory chain. ATP synthase complex consist of a soluble F(1) head domain - the catalytic core - and a membrane F(1) domain - the membrane proton channel. These two domains are linked by a central stalk rotating inside the F(1) region and a stationary peripheral stalk. During catalysis, ATP synthesis in the catalytic domain of F(1) is coupled via a rotary mechanism of the central stalk subunits to proton translocation. In vivo, can only synthesize ATP although its ATP hydrolase activity can be activated artificially in vitro. Part of the complex F(0) domain. The chain is ATP synthase F(0) complex subunit g, mitochondrial from Pongo abelii (Sumatran orangutan).